The chain runs to 366 residues: MEKHIILLPGDGIGREIIDSAKQVLTAIASEYNHRFTFEEHAIGGSAIDEYGTPLPDKTVDACSKADAILLGAVGGPKWDANPSHLRPEKGLLGIRKQLGLFANLRPVKTISSLLYASPLKEEIVSQADMLIIRELTGGIYFGTPSERTTNGVVDTLQYSREEIERIVERGFEAARIRKKHLTSVDKANVLESSKLWREIVEEKSKDYPDVAVNHLLVDAAAMKLVTQPSFFDVIVTENLFGDILSDEASVLTGSLGMLPSASLRADGLGLYEPVHGSAPDIAGKGIANPLAMILSAALMLEHSFGLVDEAKEIERAVNDCLLQGFHTADIHIPGGVQVGTKQMTDAVLENVTTKSISDSICSSYV.

Gly-76–Glu-89 contacts NAD(+). Arg-96, Arg-106, Arg-134, and Asp-219 together coordinate substrate. Mg(2+) contacts are provided by Asp-219, Asp-243, and Asp-247. Residue Gly-277–Asn-289 participates in NAD(+) binding.

It belongs to the isocitrate and isopropylmalate dehydrogenases family. LeuB type 1 subfamily. In terms of assembly, homodimer. It depends on Mg(2+) as a cofactor. The cofactor is Mn(2+).

The protein resides in the cytoplasm. The enzyme catalyses (2R,3S)-3-isopropylmalate + NAD(+) = 4-methyl-2-oxopentanoate + CO2 + NADH. The protein operates within amino-acid biosynthesis; L-leucine biosynthesis; L-leucine from 3-methyl-2-oxobutanoate: step 3/4. Its function is as follows. Catalyzes the oxidation of 3-carboxy-2-hydroxy-4-methylpentanoate (3-isopropylmalate) to 3-carboxy-4-methyl-2-oxopentanoate. The product decarboxylates to 4-methyl-2 oxopentanoate. The sequence is that of 3-isopropylmalate dehydrogenase from Oceanobacillus iheyensis (strain DSM 14371 / CIP 107618 / JCM 11309 / KCTC 3954 / HTE831).